The following is a 183-amino-acid chain: Putative 3-methyladenine DNA glycosylase (183 aa).

This sequence belongs to the DNA glycosylase MPG family.

This is Putative 3-methyladenine DNA glycosylase from Rickettsia africae (strain ESF-5).